The chain runs to 531 residues: Peptide chain release factor 3 (531 aa).

The region spanning Ala13–Lys282 is the tr-type G domain. GTP is bound by residues Ser22–Thr29, Asp90–His94, and Asn144–Asp147.

The protein belongs to the TRAFAC class translation factor GTPase superfamily. Classic translation factor GTPase family. PrfC subfamily.

The protein resides in the cytoplasm. Its function is as follows. Increases the formation of ribosomal termination complexes and stimulates activities of RF-1 and RF-2. It binds guanine nucleotides and has strong preference for UGA stop codons. It may interact directly with the ribosome. The stimulation of RF-1 and RF-2 is significantly reduced by GTP and GDP, but not by GMP. The protein is Peptide chain release factor 3 of Psychrobacter cryohalolentis (strain ATCC BAA-1226 / DSM 17306 / VKM B-2378 / K5).